A 736-amino-acid polypeptide reads, in one-letter code: Elongation factor 2 (736 aa).

The 217-residue stretch at 18 to 234 folds into the tr-type G domain; the sequence is TRVRNIGIIA…VIDAYTASDK (217 aa). Residues 27 to 34, 93 to 97, and 147 to 150 contribute to the GTP site; these read AHVDHGKT, DTPGH, and NKVD. The residue at position 603 (H603) is a Diphthamide.

Belongs to the TRAFAC class translation factor GTPase superfamily. Classic translation factor GTPase family. EF-G/EF-2 subfamily.

The protein localises to the cytoplasm. Functionally, catalyzes the GTP-dependent ribosomal translocation step during translation elongation. During this step, the ribosome changes from the pre-translocational (PRE) to the post-translocational (POST) state as the newly formed A-site-bound peptidyl-tRNA and P-site-bound deacylated tRNA move to the P and E sites, respectively. Catalyzes the coordinated movement of the two tRNA molecules, the mRNA and conformational changes in the ribosome. In Saccharolobus solfataricus (strain ATCC 35092 / DSM 1617 / JCM 11322 / P2) (Sulfolobus solfataricus), this protein is Elongation factor 2 (fusA).